A 403-amino-acid polypeptide reads, in one-letter code: Phosphopentomutase (403 aa).

Mn(2+)-binding residues include Asp-13, Asp-298, His-303, Asp-339, His-340, and His-351.

The protein belongs to the phosphopentomutase family. Requires Mn(2+) as cofactor.

The protein localises to the cytoplasm. It catalyses the reaction 2-deoxy-alpha-D-ribose 1-phosphate = 2-deoxy-D-ribose 5-phosphate. The enzyme catalyses alpha-D-ribose 1-phosphate = D-ribose 5-phosphate. Its pathway is carbohydrate degradation; 2-deoxy-D-ribose 1-phosphate degradation; D-glyceraldehyde 3-phosphate and acetaldehyde from 2-deoxy-alpha-D-ribose 1-phosphate: step 1/2. Its function is as follows. Isomerase that catalyzes the conversion of deoxy-ribose 1-phosphate (dRib-1-P) and ribose 1-phosphate (Rib-1-P) to deoxy-ribose 5-phosphate (dRib-5-P) and ribose 5-phosphate (Rib-5-P), respectively. The polypeptide is Phosphopentomutase (Streptococcus equi subsp. zooepidemicus (strain MGCS10565)).